Reading from the N-terminus, the 132-residue chain is MNLKQIAKDTAKTLQSYLTYQALMTVLAQLGETNPPLALWLHTFSVGKVQDGEAYVKELFREQPDLALRIMTVREHIAEEVAEFLPEMVRSGIQQANMEQRRQHLERMTHLSLSNPSPESEQQTISDTDWDH.

Residues 110 to 132 (HLSLSNPSPESEQQTISDTDWDH) are disordered. The segment covering 111–132 (LSLSNPSPESEQQTISDTDWDH) has biased composition (polar residues).

The protein belongs to the RbcX family. Homodimer. Interacts with the exposed C-terminal peptide of RbcL via its central cleft, contacts a second RbcL monomer via its peripheral polar surface. RbcX and Raf1 can bind simultaneously to RbcL.

Its subcellular location is the carboxysome. The protein localises to the cytoplasm. Functionally, an RbcL-specific chaperone. The central cleft of the RbcX homodimer (RbcX2) binds the C-terminus of an RbcL monomer, stabilizing the C-terminus and probably preventing its reassociation with chaperonin GroEL-ES. At the same time the peripheral region of RbcX2 binds a second RbcL monomer, bridging the RbcL homodimers in the correct orientation. The RbcX2(2)-bound RbcL dimers then assemble into the RbcL8 core (RbcL8-(RbcX2)8). RbcS binding triggers the release of RbcX2. In terms of biological role, when rbcL-rbcX-rbcS or rbcL-rbcS were overexpressed in E.coli no change in reconstituted RuBisCO activity was observed, which suggests RbcX plays no role in RuBisCO assembly in this system. However in PubMed:8472962 E.coli chaperones groL and groS were also overexpressed, which may compensate for lack of rbcX. This is RuBisCO chaperone RbcX from Nostoc sp. (strain PCC 7120 / SAG 25.82 / UTEX 2576).